We begin with the raw amino-acid sequence, 905 residues long: Dopamine D2-like receptor (905 aa).

Residues 1–23 are disordered; the sequence is MLSPFDWRRGISSSGTGGTMAAQ. The Extracellular portion of the chain corresponds to 1–377; the sequence is MLSPFDWRRG…GELRVVDHNY (377 aa). 8 N-linked (GlcNAc...) asparagine glycosylation sites follow: N88, N146, N156, N166, N174, N257, N314, and N343. The chain crosses the membrane as a helical span at residues 378–398; it reads WALILILFPILTLFGNILVIL. Residues 399-416 are Cytoplasmic-facing; that stretch reads SVCRERSLQTVTNYFIVS. Residues 417 to 437 traverse the membrane as a helical segment; that stretch reads LAIADLLVAVVVMPFAVYFLV. Residues 438 to 450 are Extracellular-facing; that stretch reads NGAWALPDVVCDF. An intrachain disulfide couples C448 to C525. A helical membrane pass occupies residues 451–471; the sequence is YIAMDVICSTSSIFNLVAISI. Residues 472-493 are Cytoplasmic-facing; it reads DRYIAVTQPIKYAKHKNSRRVC. Residues 494 to 514 traverse the membrane as a helical segment; sequence LTILLVWAISAAIGSPIVLGL. Residues 515–531 are Extracellular-facing; it reads NNTPNREPDVCAFYNAD. Residues 532 to 552 form a helical membrane-spanning segment; it reads FILYSSLSSFYIPCIIMVFLY. Over 553 to 830 the chain is Cytoplasmic; sequence WNIFKALRSR…AKKERKATKT (278 aa). 3 disordered regions span residues 600–631, 702–753, and 780–799; these read SRHA…ISPD, ATSA…SVGV, and DSTL…KNSQ. Low complexity predominate over residues 702–722; the sequence is ATSAAPRSSGSPPDSPLPSGA. Positions 723-734 are enriched in polar residues; it reads TLQRSSVSSQRR. The segment covering 735 to 746 has biased composition (basic and acidic residues); sequence PTGDDSPKRGEP. The helical transmembrane segment at 831–851 threads the bilayer; that stretch reads LAIVLGVFLFCWLPFFSCNIM. The Extracellular portion of the chain corresponds to 852–869; it reads DAMCAKFKKDCRPGLTAY. A helical membrane pass occupies residues 870–890; sequence MMTTWLGYINSFVNPVIYTIF. At 891 to 905 the chain is on the cytoplasmic side; that stretch reads NPEFRKAFKKIMHMG.

It belongs to the G-protein coupled receptor 1 family. As to expression, highest expression is in adult heads.

It is found in the cell membrane. In terms of biological role, receptor for dopamine. The activity of this receptor is mediated by G proteins which inhibit adenylyl cyclase. In Drosophila melanogaster (Fruit fly), this protein is Dopamine D2-like receptor.